The following is a 322-amino-acid chain: 4-diphosphocytidyl-2-C-methyl-D-erythritol kinase (322 aa).

Residue Lys-27 is part of the active site. 112–122 (PVAGGMAGGSA) is a binding site for ATP. The active site involves Asp-154.

Belongs to the GHMP kinase family. IspE subfamily.

It carries out the reaction 4-CDP-2-C-methyl-D-erythritol + ATP = 4-CDP-2-C-methyl-D-erythritol 2-phosphate + ADP + H(+). The protein operates within isoprenoid biosynthesis; isopentenyl diphosphate biosynthesis via DXP pathway; isopentenyl diphosphate from 1-deoxy-D-xylulose 5-phosphate: step 3/6. Catalyzes the phosphorylation of the position 2 hydroxy group of 4-diphosphocytidyl-2C-methyl-D-erythritol. The protein is 4-diphosphocytidyl-2-C-methyl-D-erythritol kinase of Mycolicibacterium smegmatis (strain ATCC 700084 / mc(2)155) (Mycobacterium smegmatis).